Here is a 113-residue protein sequence, read N- to C-terminus: Large ribosomal subunit protein uL24 (113 aa).

This sequence belongs to the universal ribosomal protein uL24 family. Part of the 50S ribosomal subunit.

One of two assembly initiator proteins, it binds directly to the 5'-end of the 23S rRNA, where it nucleates assembly of the 50S subunit. In terms of biological role, one of the proteins that surrounds the polypeptide exit tunnel on the outside of the subunit. The chain is Large ribosomal subunit protein uL24 from Rickettsia typhi (strain ATCC VR-144 / Wilmington).